A 257-amino-acid polypeptide reads, in one-letter code: Zinc import ATP-binding protein ZnuC (257 aa).

In terms of domain architecture, ABC transporter spans 6-221 (IRLEQVGVSF…PAFVELFGQN (216 aa)). 38–45 (GPNGAGKT) serves as a coordination point for ATP.

It belongs to the ABC transporter superfamily. Zinc importer (TC 3.A.1.15.5) family. As to quaternary structure, the complex is composed of two ATP-binding proteins (ZnuC), two transmembrane proteins (ZnuB) and a solute-binding protein (ZnuA).

The protein localises to the cell inner membrane. It carries out the reaction Zn(2+)(out) + ATP(in) + H2O(in) = Zn(2+)(in) + ADP(in) + phosphate(in) + H(+)(in). Part of the ABC transporter complex ZnuABC involved in zinc import. Responsible for energy coupling to the transport system. This chain is Zinc import ATP-binding protein ZnuC, found in Pseudomonas entomophila (strain L48).